Reading from the N-terminus, the 196-residue chain is Peroxynitrite isomerase (196 aa).

The segment at 1 to 29 (MSDENPLQPPWLNAPPVDPYPYEESHDLR) is disordered. Residues 7–19 (LQPPWLNAPPVDP) are compositionally biased toward pro residues. Residues 46–52 (GVWRGRG) carry the GXWXGXG motif. H186 provides a ligand contact to heme b.

This sequence belongs to the nitrobindin family. Homodimer. Requires heme b as cofactor.

It carries out the reaction peroxynitrite = nitrate. It participates in nitrogen metabolism. Its function is as follows. Heme-binding protein able to scavenge peroxynitrite and to protect free L-tyrosine against peroxynitrite-mediated nitration, by acting as a peroxynitrite isomerase that converts peroxynitrite to nitrate. Therefore, this protein likely plays a role in peroxynitrite sensing and in the detoxification of reactive nitrogen and oxygen species (RNS and ROS, respectively). Is able to bind nitric oxide (NO) in vitro, but may act as a sensor of peroxynitrite levels in vivo. In Salinispora arenicola (strain CNS-205), this protein is Peroxynitrite isomerase.